The sequence spans 214 residues: Ribonuclease T (214 aa).

The Exonuclease domain maps to 20-195 (VVVDVETAGF…YDTQKTAELF (176 aa)). Residues Asp23, Glu25, His182, and Asp187 each coordinate Mg(2+). The active-site Proton donor/acceptor is His182.

Belongs to the RNase T family. Homodimer. It depends on Mg(2+) as a cofactor.

In terms of biological role, trims short 3' overhangs of a variety of RNA species, leaving a one or two nucleotide 3' overhang. Responsible for the end-turnover of tRNA: specifically removes the terminal AMP residue from uncharged tRNA (tRNA-C-C-A). Also appears to be involved in tRNA biosynthesis. This Vibrio parahaemolyticus serotype O3:K6 (strain RIMD 2210633) protein is Ribonuclease T.